The following is a 226-amino-acid chain: Cytidylate kinase (226 aa).

10–18 lines the ATP pocket; sequence GPASSGKST.

The protein resides in the cytoplasm. It catalyses the reaction CMP + ATP = CDP + ADP. The enzyme catalyses dCMP + ATP = dCDP + ADP. The chain is Cytidylate kinase from Streptococcus pyogenes serotype M6 (strain ATCC BAA-946 / MGAS10394).